An 89-amino-acid polypeptide reads, in one-letter code: Small ribosomal subunit protein uS15 (89 aa).

Belongs to the universal ribosomal protein uS15 family. In terms of assembly, part of the 30S ribosomal subunit. Forms a bridge to the 50S subunit in the 70S ribosome, contacting the 23S rRNA.

One of the primary rRNA binding proteins, it binds directly to 16S rRNA where it helps nucleate assembly of the platform of the 30S subunit by binding and bridging several RNA helices of the 16S rRNA. In terms of biological role, forms an intersubunit bridge (bridge B4) with the 23S rRNA of the 50S subunit in the ribosome. The sequence is that of Small ribosomal subunit protein uS15 from Leifsonia xyli subsp. xyli (strain CTCB07).